We begin with the raw amino-acid sequence, 155 residues long: FUN14 domain-containing protein 1 (155 aa).

At 1–47 (MASRNPPPQDYESDDESYEVLDLTEYARRHHWWNRVFGHSSGPMVEK) the chain is on the cytoplasmic side. A phosphoserine mark is found at Ser-13 and Ser-17. Tyr-18 is modified (phosphotyrosine; by SRC). The YXXL motif lies at 18–21 (YEVL). The chain crosses the membrane as a helical span at residues 48–68 (YSVATQIVMGGVTGWCAGFLF). Over 69–74 (QKVGKL) the chain is Mitochondrial intermembrane. Residues 75–95 (AATAVGGGFLLLQVASHSGYV) form a helical membrane-spanning segment. Residues 96–133 (QIDWKRVEKDVNKAKRQIKKRANKAAPEINNIIEEATD) lie on the Cytoplasmic side of the membrane. Residue Lys-119 forms a Glycyl lysine isopeptide (Lys-Gly) (interchain with G-Cter in ubiquitin) linkage. The helical transmembrane segment at 134–154 (FIKQNIVISSGFVGGFLLGLA) threads the bilayer. A topological domain (mitochondrial intermembrane) is located at residue Ser-155.

It belongs to the FUN14 family. As to quaternary structure, interacts (via YXXL motif) with MAP1 LC3 family proteins MAP1LC3A, MAP1LC3B and GABARAP. Interacts with DNM1L/DPR1. Interacts with GPX4. Phosphorylation at Ser-13 by CK2 and at Tyr-18 by SRC inhibits activation of mitophagy. Following hypoxia, dephosphorylated at Tyr-18, leading to interaction with MAP1 LC3 family proteins and triggering mitophagy. Dephosphorylation is mediated by PGAM5. Phosphorylated by ULK1 at Ser-17 which enhances FUNDC1 binding to LC3. Post-translationally, ubiquitinated on Lys-119. Deubiquitinated by USP19; leading to hypoxia-induced DRP1 oligomerization and GTPase activity.

The protein resides in the mitochondrion outer membrane. Functionally, integral mitochondrial outer-membrane protein that mediates the formation of mitochondria-associated endoplasmic reticulum membranes (MAMs). In turn, mediates angiogenesis and neoangiogenesis through interference with intracellular Ca(2+) communication and regulation of the vascular endothelial growth factor receptor KDR/VEGFR2 expression at both mRNA and protein levels. Also acts as an activator of hypoxia-induced mitophagy, an important mechanism for mitochondrial quality and homeostasis, by interacting with and recruiting LC3 protein family to mitochondria. Mechanistically, recruits DRP1 at ER-mitochondria contact sites leading to DRP1 oligomerization and GTPase activity to facilitate mitochondrial fission during hypoxia. Additionally, plays a role in hepatic ferroptosis by interacting directly with glutathione peroxidase/GPX4 to facilitate its recruitment into mitochondria through TOM/TIM complex where it is degraded by mitophagy. The chain is FUN14 domain-containing protein 1 (Fundc1) from Mus musculus (Mouse).